Reading from the N-terminus, the 296-residue chain is Nucleotide-binding protein str0831 (296 aa).

Gly-13–Thr-20 serves as a coordination point for ATP. Asp-63–Ser-66 is a GTP binding site.

The protein belongs to the RapZ-like family.

Functionally, displays ATPase and GTPase activities. This chain is Nucleotide-binding protein str0831, found in Streptococcus thermophilus (strain CNRZ 1066).